Consider the following 388-residue polypeptide: Succinate--CoA ligase [ADP-forming] subunit beta (388 aa).

In terms of domain architecture, ATP-grasp spans 9-244; it reads KGILSGFDVR…PHEYSEEELE (236 aa). ATP contacts are provided by residues Lys-46, 53–55, Glu-99, Val-102, and Glu-107; that span reads GRG. Mg(2+) contacts are provided by Asn-199 and Asp-213. Residues Asn-264 and 320–322 contribute to the substrate site; that span reads GIM.

This sequence belongs to the succinate/malate CoA ligase beta subunit family. As to quaternary structure, heterotetramer of two alpha and two beta subunits. Mg(2+) serves as cofactor.

The catalysed reaction is succinate + ATP + CoA = succinyl-CoA + ADP + phosphate. The enzyme catalyses GTP + succinate + CoA = succinyl-CoA + GDP + phosphate. Its pathway is carbohydrate metabolism; tricarboxylic acid cycle; succinate from succinyl-CoA (ligase route): step 1/1. Succinyl-CoA synthetase functions in the citric acid cycle (TCA), coupling the hydrolysis of succinyl-CoA to the synthesis of either ATP or GTP and thus represents the only step of substrate-level phosphorylation in the TCA. The beta subunit provides nucleotide specificity of the enzyme and binds the substrate succinate, while the binding sites for coenzyme A and phosphate are found in the alpha subunit. This Anaplasma phagocytophilum (strain HZ) protein is Succinate--CoA ligase [ADP-forming] subunit beta.